Reading from the N-terminus, the 433-residue chain is D-amino acid dehydrogenase (433 aa).

Residue 3-17 (VLVLGSGVIGTASAY) participates in FAD binding.

This sequence belongs to the DadA oxidoreductase family. FAD serves as cofactor.

The enzyme catalyses a D-alpha-amino acid + A + H2O = a 2-oxocarboxylate + AH2 + NH4(+). It functions in the pathway amino-acid degradation; D-alanine degradation; NH(3) and pyruvate from D-alanine: step 1/1. Oxidative deamination of D-amino acids. This is D-amino acid dehydrogenase from Pseudomonas putida (strain W619).